Consider the following 382-residue polypeptide: Intermediate transcription factor 3 large subunit (382 aa).

The protein belongs to the poxviruses A23 family. Heterodimer of a 45 kDa and a 32 kDa subunit.

In terms of biological role, acts with RNA polymerase to initiate transcription from intermediate gene promoters. The sequence is that of Intermediate transcription factor 3 large subunit (VITF3L) from Camelus.